Here is a 281-residue protein sequence, read N- to C-terminus: Elongation factor Ts (281 aa).

Positions 80–83 (TDFV) are involved in Mg(2+) ion dislocation from EF-Tu.

Belongs to the EF-Ts family.

It is found in the cytoplasm. Functionally, associates with the EF-Tu.GDP complex and induces the exchange of GDP to GTP. It remains bound to the aminoacyl-tRNA.EF-Tu.GTP complex up to the GTP hydrolysis stage on the ribosome. The chain is Elongation factor Ts from Vibrio parahaemolyticus serotype O3:K6 (strain RIMD 2210633).